The following is a 121-amino-acid chain: Large ribosomal subunit protein uL18 (121 aa).

This sequence belongs to the universal ribosomal protein uL18 family. As to quaternary structure, part of the 50S ribosomal subunit; part of the 5S rRNA/L5/L18/L25 subcomplex. Contacts the 5S and 23S rRNAs.

Functionally, this is one of the proteins that bind and probably mediate the attachment of the 5S RNA into the large ribosomal subunit, where it forms part of the central protuberance. The polypeptide is Large ribosomal subunit protein uL18 (Streptococcus equi subsp. zooepidemicus (strain MGCS10565)).